We begin with the raw amino-acid sequence, 124 residues long: Large ribosomal subunit protein bL20c (124 aa).

It belongs to the bacterial ribosomal protein bL20 family.

Its subcellular location is the plastid. The protein resides in the chloroplast. Binds directly to 23S ribosomal RNA and is necessary for the in vitro assembly process of the 50S ribosomal subunit. It is not involved in the protein synthesizing functions of that subunit. The polypeptide is Large ribosomal subunit protein bL20c (Stigeoclonium helveticum (Green alga)).